Reading from the N-terminus, the 223-residue chain is UPF0758 protein Plut_0598 (223 aa).

The 123-residue stretch at 100–222 (RVQGAKDVFE…WFSFRESNLL (123 aa)) folds into the MPN domain. His171, His173, and Asp184 together coordinate Zn(2+). Positions 171-184 (HNHPSGDTEPSNAD) match the JAMM motif motif.

This sequence belongs to the UPF0758 family.

This is UPF0758 protein Plut_0598 from Chlorobium luteolum (strain DSM 273 / BCRC 81028 / 2530) (Pelodictyon luteolum).